The following is a 264-amino-acid chain: ATP synthase subunit a (264 aa).

6 helical membrane-spanning segments follow: residues 29–49 (TWHI…LWIF), 90–110 (IAPL…MDMI), 134–154 (DVNI…YYSI), 177–197 (IPVN…SLAL), 208–228 (LIFI…SLGV), and 235–255 (LIFH…LTIV).

Belongs to the ATPase A chain family. F-type ATPases have 2 components, CF(1) - the catalytic core - and CF(0) - the membrane proton channel. CF(1) has five subunits: alpha(3), beta(3), gamma(1), delta(1), epsilon(1). CF(0) has three main subunits: a(1), b(2) and c(9-12). The alpha and beta chains form an alternating ring which encloses part of the gamma chain. CF(1) is attached to CF(0) by a central stalk formed by the gamma and epsilon chains, while a peripheral stalk is formed by the delta and b chains.

Its subcellular location is the cell inner membrane. Its function is as follows. Key component of the proton channel; it plays a direct role in the translocation of protons across the membrane. The protein is ATP synthase subunit a of Shewanella oneidensis (strain ATCC 700550 / JCM 31522 / CIP 106686 / LMG 19005 / NCIMB 14063 / MR-1).